Consider the following 343-residue polypeptide: Selenide, water dikinase (343 aa).

The active site involves U16. U16 is a non-standard amino acid (selenocysteine). Residues K19 and 46-48 (GAE) each bind ATP. D49 contributes to the Mg(2+) binding site. ATP is bound by residues D66, D89, and 137–139 (GHT). D89 is a Mg(2+) binding site. D225 serves as a coordination point for Mg(2+).

It belongs to the selenophosphate synthase 1 family. Class I subfamily. In terms of assembly, homodimer. Mg(2+) is required as a cofactor.

It catalyses the reaction hydrogenselenide + ATP + H2O = selenophosphate + AMP + phosphate + 2 H(+). Synthesizes selenophosphate from selenide and ATP. The chain is Selenide, water dikinase from Geobacter sp. (strain M21).